The sequence spans 218 residues: Urease accessory protein UreG (218 aa).

Residue Gly22–Thr29 coordinates GTP.

The protein belongs to the SIMIBI class G3E GTPase family. UreG subfamily. Homodimer. UreD, UreF and UreG form a complex that acts as a GTP-hydrolysis-dependent molecular chaperone, activating the urease apoprotein by helping to assemble the nickel containing metallocenter of UreC. The UreE protein probably delivers the nickel.

It localises to the cytoplasm. In terms of biological role, facilitates the functional incorporation of the urease nickel metallocenter. This process requires GTP hydrolysis, probably effectuated by UreG. This chain is Urease accessory protein UreG, found in Polaromonas naphthalenivorans (strain CJ2).